The sequence spans 193 residues: FMN-dependent NADH:quinone oxidoreductase (193 aa).

FMN contacts are provided by residues Ser-9, 15-17 (SSS), and 137-140 (TSGG).

The protein belongs to the azoreductase type 1 family. As to quaternary structure, homodimer. FMN serves as cofactor.

The enzyme catalyses 2 a quinone + NADH + H(+) = 2 a 1,4-benzosemiquinone + NAD(+). It carries out the reaction N,N-dimethyl-1,4-phenylenediamine + anthranilate + 2 NAD(+) = 2-(4-dimethylaminophenyl)diazenylbenzoate + 2 NADH + 2 H(+). Its function is as follows. Quinone reductase that provides resistance to thiol-specific stress caused by electrophilic quinones. Also exhibits azoreductase activity. Catalyzes the reductive cleavage of the azo bond in aromatic azo compounds to the corresponding amines. The sequence is that of FMN-dependent NADH:quinone oxidoreductase from Pelagibacter ubique (strain HTCC1062).